Here is an 888-residue protein sequence, read N- to C-terminus: Serine/threonine-protein phosphatase 1 regulatory subunit 10 (888 aa).

The interval 1–348 is interaction with TOX4; the sequence is MGSGPIDPKE…EPAPPAEPMD (348 aa). The TFIIS N-terminal domain maps to 73-147; the sequence is KLLNNWLTYS…SDWMAVIRSQ (75 aa). Disordered stretches follow at residues 147–213, 247–270, 306–400, and 534–853; these read QSST…STGL, SATA…NTAP, KKKK…KTVT, and VETL…HGGD. Basic and acidic residues-rich tracts occupy residues 153 to 166 and 174 to 196; these read AEKD…EGKS and PLTE…EKPK. Residue lysine 179 forms a Glycyl lysine isopeptide (Lys-Gly) (interchain with G-Cter in SUMO2) linkage. Residues 248–258 show a composition bias toward low complexity; it reads ATAAPGDAAPP. A Glycyl lysine isopeptide (Lys-Gly) (interchain with G-Cter in SUMO2) cross-link involves residue lysine 262. Residue serine 313 is modified to Phosphoserine. Over residues 325-334 the composition is skewed to polar residues; that stretch reads KTSTEQSTAK. Serine 382 is modified (phosphoserine). The interval 388-417 is necessary for interaction with PPP1CA; the sequence is QLTRKGRKRKTVTWPEEGKLREYFYFELDE. The segment at 393 to 408 is necessary for interaction with PPP1CC; it reads GRKRKTVTWPEEGKLR. The PP1-binding motif motif lies at 394–423; that stretch reads RKRKTVTWPEEGKLREYFYFELDETERVNV. The residue at position 398 (threonine 398) is a Phosphothreonine. Residues 418 to 619 are interaction with WDR82; the sequence is TERVNVNKIK…LKQMLVPHGL (202 aa). Over residues 540–551 the composition is skewed to gly residues; the sequence is GGSGGSPDGAGG. A phosphoserine mark is found at serine 545 and serine 591. Positions 583–595 are enriched in polar residues; that stretch reads EILTSIMGSPNSH. A compositionally biased stretch (basic and acidic residues) spans 596–611; the sequence is PSEELLKQPDYSDKLK. The span at 644–655 shows a compositional bias: pro residues; it reads PPGPGGPMPGPH. Position 665 is an omega-N-methylarginine (arginine 665). Positions 674-690 are enriched in low complexity; that stretch reads RGGDPFWDGPGDPMRGG. Arginine 693 and arginine 737 each carry omega-N-methylarginine. 2 stretches are compositionally biased toward gly residues: residues 724 to 762 and 784 to 794; these read ARGG…GSMG and GPGGNMGGSGG. The span at 811-851 shows a compositional bias: basic and acidic residues; sequence PHDVPSHRGHDHRGPPPHEHRGHDGHGGGGHRGHDGGHSHG. The segment at 854-882 adopts a C3H1-type zinc-finger fold; that stretch reads MSNRPVCRHFMMKGNCRYENNCAFYHPGV.

Component of the PNUTS-PP1 complex (also named PTW/PP1 complex), composed of PPP1R10/PNUTS, TOX4, WDR82, and PPP1CA (or PPP1CB or PPP1CC). Phosphorylated on Ser-398 by PKA within the region necessary for interaction with PPP1CA.

Its subcellular location is the nucleus. It is found in the chromosome. Functionally, substrate-recognition component of the PNUTS-PP1 protein phosphatase complex, a protein phosphatase 1 (PP1) complex that promotes RNA polymerase II transcription pause-release, allowing transcription elongation. Promoter-proximal pausing by RNA polymerase II is a transcription halt following transcription initiation but prior to elongation, which acts as a checkpoint to control that transcripts are favorably configured for transcriptional elongation. The PNUTS-PP1 complex mediates the release of RNA polymerase II from promoter-proximal region of genes by catalyzing dephosphorylation of proteins involved in transcription, such as AFF4, CDK9, MEPCE, INTS12, NCBP1, POLR2M/GDOWN1 and SUPT6H. The PNUTS-PP1 complex also regulates RNA polymerase II transcription termination by mediating dephosphorylation of SUPT5H in termination zones downstream of poly(A) sites, thereby promoting deceleration of RNA polymerase II transcription. PNUTS-PP1 complex is also involved in the response to replication stress by mediating dephosphorylation of POLR2A at 'Ser-5' of the CTD, promoting RNA polymerase II degradation. The PNUTS-PP1 complex also plays a role in the control of chromatin structure and cell cycle progression during the transition from mitosis into interphase. PNUTS-PP1 complex mediates dephosphorylation of MYC, promoting MYC stability by preventing MYC ubiquitination by the SCF(FBXW7) complex. In addition to acts as a substrate-recognition component, PPP1R10/PNUTS also acts as a nuclear targeting subunit for the PNUTS-PP1 complex. In some context, PPP1R10/PNUTS also acts as an inhibitor of protein phosphatase 1 (PP1) activity by preventing access to substrates, such as RB. In Mus musculus (Mouse), this protein is Serine/threonine-protein phosphatase 1 regulatory subunit 10.